A 401-amino-acid chain; its full sequence is Cytochrome P450 BJ-1 (401 aa).

Cys350 contributes to the heme binding site.

This sequence belongs to the cytochrome P450 family. It depends on heme as a cofactor.

Its function is as follows. Cytochromes P450 are a group of heme-thiolate monooxygenases. They oxidize a variety of structurally unrelated compounds, including steroids, fatty acids, and xenobiotics. In Bradyrhizobium diazoefficiens (strain JCM 10833 / BCRC 13528 / IAM 13628 / NBRC 14792 / USDA 110), this protein is Cytochrome P450 BJ-1 (cyp112).